We begin with the raw amino-acid sequence, 314 residues long: Carbamate kinase (314 aa).

This sequence belongs to the carbamate kinase family. Homodimer.

The protein resides in the cytoplasm. The enzyme catalyses hydrogencarbonate + NH4(+) + ATP = carbamoyl phosphate + ADP + H2O + H(+). This is Carbamate kinase (cpkA) from Pyrococcus horikoshii (strain ATCC 700860 / DSM 12428 / JCM 9974 / NBRC 100139 / OT-3).